A 150-amino-acid chain; its full sequence is Putative antitoxin VapB45 (150 aa).

Residues 124-150 (AQRPVAAGRPRPRPQRPVSDRVSDQRR) form a disordered region. Positions 141 to 150 (VSDRVSDQRR) are enriched in basic and acidic residues.

This sequence belongs to the phD/YefM antitoxin family.

Its function is as follows. Possibly the antitoxin component of a type II toxin-antitoxin (TA) system. Its cognate toxin is VapC45 (Potential). The chain is Putative antitoxin VapB45 (vapB45) from Mycobacterium tuberculosis (strain CDC 1551 / Oshkosh).